The chain runs to 561 residues: 3-hydroxy-3-methylglutaryl-coenzyme A reductase 3 (561 aa).

2 consecutive transmembrane segments (helical) span residues 25–45 and 69–89; these read PIRH…AYLM and IFGL…AFVQ. The tract at residues 90-145 is linker; it reads SIVSSSDDEEEDFLVGPARGSSAAAAVAPPPPPSSPAQCSLLGSPHDDAARERMPE. The disordered stretch occupies residues 113–146; that stretch reads AAAVAPPPPPSSPAQCSLLGSPHDDAARERMPEE. Residues 134-143 are compositionally biased toward basic and acidic residues; the sequence is PHDDAARERM. Positions 146–561 are catalytic; the sequence is EDEEIVSSVV…SSKDMSKVIS (416 aa). E240 serves as the catalytic Charge relay system. N-linked (GlcNAc...) asparagine glycosylation occurs at N304. Residues K372 and D448 each act as charge relay system in the active site. H546 functions as the Proton donor in the catalytic mechanism. N550 carries N-linked (GlcNAc...) asparagine glycosylation.

The protein belongs to the HMG-CoA reductase family.

It localises to the endoplasmic reticulum membrane. It catalyses the reaction (R)-mevalonate + 2 NADP(+) + CoA = (3S)-3-hydroxy-3-methylglutaryl-CoA + 2 NADPH + 2 H(+). The protein operates within metabolic intermediate biosynthesis; (R)-mevalonate biosynthesis; (R)-mevalonate from acetyl-CoA: step 3/3. Its function is as follows. Catalyzes the synthesis of mevalonate. The specific precursor of all isoprenoid compounds present in plants. The sequence is that of 3-hydroxy-3-methylglutaryl-coenzyme A reductase 3 (HMG3) from Oryza sativa subsp. japonica (Rice).